Here is a 971-residue protein sequence, read N- to C-terminus: DNA-directed RNA polymerase subunit Rpo1N (971 aa).

Residue methionine 1 is modified to Blocked amino end (Met). Zn(2+)-binding residues include cysteine 62, cysteine 65, cysteine 72, histidine 75, cysteine 102, cysteine 105, cysteine 149, and cysteine 152. Residues 185–204 (SMQPDEDEDDAGVSPQELAE) form a disordered region. 3 residues coordinate Mg(2+): aspartate 527, aspartate 529, and aspartate 531. Positions 951-971 (VEEPPTNLSEHGAAWEVESDD) are disordered.

This sequence belongs to the RNA polymerase beta' chain family. As to quaternary structure, part of the RNA polymerase complex. Mg(2+) serves as cofactor. Zn(2+) is required as a cofactor. Post-translationally, the N-terminus is blocked.

Its subcellular location is the cytoplasm. It catalyses the reaction RNA(n) + a ribonucleoside 5'-triphosphate = RNA(n+1) + diphosphate. DNA-dependent RNA polymerase (RNAP) catalyzes the transcription of DNA into RNA using the four ribonucleoside triphosphates as substrates. Forms the clamp head domain. The protein is DNA-directed RNA polymerase subunit Rpo1N of Halobacterium salinarum (strain ATCC 29341 / DSM 671 / R1).